The chain runs to 171 residues: uncharacterized protein (171 aa).

The signal sequence occupies residues 1–20 (MRDFYLFLGAVFLLVLGVWA).

This is an uncharacterized protein from Aquifex aeolicus (strain VF5).